Consider the following 310-residue polypeptide: Ribosomal protein uL3 glutamine methyltransferase (310 aa).

This sequence belongs to the protein N5-glutamine methyltransferase family. PrmB subfamily.

It catalyses the reaction L-glutaminyl-[ribosomal protein uL3] + S-adenosyl-L-methionine = N(5)-methyl-L-glutaminyl-[ribosomal protein uL3] + S-adenosyl-L-homocysteine + H(+). Its function is as follows. Methylates large ribosomal subunit protein uL3 on a specific glutamine residue. The sequence is that of Ribosomal protein uL3 glutamine methyltransferase from Vibrio anguillarum (strain ATCC 68554 / 775) (Listonella anguillarum).